We begin with the raw amino-acid sequence, 216 residues long: Endoplasmic reticulum vesicle protein 25 (216 aa).

Residues 1–20 form the signal peptide; it reads MASLKSLLSGFLLLAGAAQA. The Lumenal portion of the chain corresponds to 21 to 185; the sequence is LKFDLEATSS…TNESTNNRVK (165 aa). The 91-residue stretch at 36-126 folds into the GOLD domain; sequence RRCIRNFVNK…RRHVELDIDI (91 aa). The chain crosses the membrane as a helical span at residues 186-206; sequence WFGMATTFLLIALWGWQIMYL. The Cytoplasmic segment spans residues 207 to 216; it reads RAYFRSKHLI.

Belongs to the EMP24/GP25L family.

It localises to the endoplasmic reticulum membrane. It is found in the golgi apparatus membrane. Its function is as follows. Constituent of COPII-coated endoplasmic reticulum-derived transport vesicles. Required for efficient transport of a subset of secretory proteins to the Golgi. Facilitates retrograde transport from the Golgi to the endoplasmic reticulum. The polypeptide is Endoplasmic reticulum vesicle protein 25 (erv-1) (Neurospora crassa (strain ATCC 24698 / 74-OR23-1A / CBS 708.71 / DSM 1257 / FGSC 987)).